The primary structure comprises 188 residues: Glutathione S-transferase 2 (188 aa).

Residues 2–79 form the GST N-terminal domain; that stretch reads VHYKLMCFDV…FLARQYGYSG (78 aa). Residues K43, 49-51, and 63-64 each bind glutathione; these read GQL and QS. One can recognise a GST C-terminal domain in the interval 81–188; the sequence is TPTEEMQVDS…PHLNVFIRKL (108 aa).

This sequence belongs to the GST superfamily. Sigma family.

It carries out the reaction RX + glutathione = an S-substituted glutathione + a halide anion + H(+). Its function is as follows. Conjugation of reduced glutathione to a wide number of exogenous and endogenous hydrophobic electrophiles. The protein is Glutathione S-transferase 2 (gst-2) of Caenorhabditis elegans.